We begin with the raw amino-acid sequence, 1219 residues long: MTEEIKFSVLVSLFNWIQKSKTSSQKRSKFRKFLDTYCKPSDYFVAVRLIIPSLDRERGSYGLKESVLATCLIDALGISRDAPDAVRLLNWRKGGTAKAGANAGNFSLIAAEVLQRRQGMASGGLTIKELNDLLDRLASSENRAEKTLVLSTLIQKTNAQEMKWVIRIILKDLKLGMSEKSIFQEFHPDAEDLFNVTCDLKLVCEKLRDRHQRHKRQDIEVGKAVRPQLAMRIGDVNAAWKKLHGKDVVAECKFDGDRIQIHKNGTDIHYFSRNFLDHSEYAHAMSDLIVQNILVDKCILDGEMLVWDTSLNRFAEFGSNQEIAKAAREGLDSHKQLCYVAFDVLYVGDTSVIHQSLKERHELLKKVVKPLKGRLEVLVPEGGLNVHRPSGEPSWSIVVHAAADVERFFKETVENRDEGIVLKDLESKWEPGDRSGKWMKLKPEYIRAGADLDVLIIGGYYGSGRRGGEVAQFLVALADRAEANVYPRRFMSFCRVGTGLSDDELNTVVSKLKPYFRKNEHPKKAPPSFYQVTNHSKERPDVWIDSPEKSIILSITSDIRTIRSEVFVAPYSLRFPRIDKVRYDKPWHECLDVQAFVELVNSSNGTTQKQKESESTQDNPKVNKSSKRGEKKNVSLVPSQFIQTDVSDIKGKTSIFSNMIFYFVNVPRSHSLETFHKMVVENGGKFSMNLNNSVTHCIAAESSGIKYQAAKRQRDVIHFSWVLDCCSRNKMLPLLPKYFLHLTDASRTKLQDDIDEFSDSYYWDLDLEGLKQVLSNAKQSEDSKSIDYYKKKLCPEKRWSCLLSCCVYFYPYSQTLSTEEEALLGIMAKRLMLEVLMAGGKVSNNLAHASHLVVLAMAEEPLDFTLVSKSFSEMEKRLLLKKRLHVVSSHWLEESLQREEKLCEDVYTLRPKYMEESDTEESDKSEHDTTEVASQGSAQTKEPASSKIAITSSRGRSNTRAVKRGRSSTNSLQRVQRRRGKQPSKISGDETEESDASEEKVSTRLSDIAEETDSFGEAQRNSSRGKCAKRGKSRVGQTQRVQRSRRGKKAAKIGGDESDENDELDGNNNVSADAEEGNAAGRSVENEETREPDIAKYTESQQRDNTVAVEEALQDSRNAKTEMDMKEKLQIHEDPLQAMLMKMFPIPSQKTTETSNRTTGEYRKANVSGECESSEKRKLDAETDNTSVNAGAESDVVPPLVKKKKVSYRDVAGELLKDW.

The ATP site is built by E251, K253, R258, R273, E303, F342, E418, K423, R434, K440, and K442. K253 acts as the N6-AMP-lysine intermediate in catalysis. E303 serves as a coordination point for Mg(2+). E418 is a Mg(2+) binding site. A disordered region spans residues 604-632 (NGTTQKQKESESTQDNPKVNKSSKRGEKK). 2 BRCT domains span residues 651–739 (GKTS…PKYF) and 807–909 (VYFY…VYTL). Disordered regions lie at residues 914–1126 (MEES…MDMK) and 1146–1197 (IPSQ…SDVV). The segment covering 932–960 (VASQGSAQTKEPASSKIAITSSRGRSNTR) has biased composition (polar residues). A compositionally biased stretch (basic residues) spans 1042 to 1051 (QRSRRGKKAA). Residues 1056–1065 (DESDENDELD) show a composition bias toward acidic residues. 2 stretches are compositionally biased toward basic and acidic residues: residues 1084-1096 (VENEETREPDIAK) and 1117-1126 (RNAKTEMDMK). The segment covering 1148-1159 (SQKTTETSNRTT) has biased composition (polar residues).

It belongs to the ATP-dependent DNA ligase family. As to quaternary structure, interacts with XRCC4 via its tandem BRCT domains. Interacts with POLL. Mg(2+) is required as a cofactor. In terms of tissue distribution, widely expressed, with higher levels in young flowers and roots.

The protein resides in the nucleus. The enzyme catalyses ATP + (deoxyribonucleotide)n-3'-hydroxyl + 5'-phospho-(deoxyribonucleotide)m = (deoxyribonucleotide)n+m + AMP + diphosphate.. Functionally, DNA ligase involved in DNA non-homologous end joining (NHEJ); required for double-strand break (DSB) repair. May be involved for T-DNA integration even if not absolutely required. Seems to be dispensable under normal growth conditions. The protein is DNA ligase 4 (LIG4) of Arabidopsis thaliana (Mouse-ear cress).